The primary structure comprises 583 residues: Epsin-2 (583 aa).

Positions 8, 11, 25, 30, 63, and 73 each coordinate a 1,2-diacyl-sn-glycero-3-phospho-(1D-myo-inositol-4,5-bisphosphate). Positions Asn-12–Arg-144 constitute an ENTH domain. Polar residues predominate over residues Gln-165–His-181. Residues Gln-165–Gly-217 form a disordered region. Residue Arg-170 is modified to Omega-N-methylarginine. 3 positions are modified to phosphoserine: Ser-173, Ser-192, and Ser-195. A compositionally biased stretch (polar residues) spans His-197–Ser-216. UIM domains are found at residues Glu-218 to Glu-237 and Gly-243 to Val-262. Disordered stretches follow at residues Ser-293–Pro-384 and Thr-411–Phe-457. 4 repeat units span residues Glu-301–Trp-303, Asn-313–Trp-315, Asp-326–Trp-328, and Asp-340–Trp-342. A compositionally biased stretch (polar residues) spans Glu-301–Trp-315. Residues Glu-301–Trp-377 form a 6 X 3 AA repeats of [DE]-P-W region. Polar residues predominate over residues Thr-346–Lys-355. 2 consecutive repeat copies span residues Asp-358–Trp-360 and Asp-375–Trp-377. Ser-431 is modified (phosphoserine). Residues Ser-437 to Ser-448 show a composition bias toward low complexity. Thr-453 is modified (phosphothreonine). 2 tandem repeats follow at residues Asn-482 to Phe-484 and Asn-496 to Phe-498. The segment at Asn-482 to Phe-581 is 3 X 3 AA repeats of N-P-F. Phosphoserine is present on Ser-514. Repeat 3 spans residues Asn-579 to Phe-581.

The protein belongs to the epsin family. Binds AP-2 and clathrin. Interacts with ITSN1. Interacts with UBQLN2. Binds EPS15. Ubiquitinated. As to expression, highly expressed in brain. Detected at lower levels in lung, liver, muscle and testis.

It localises to the cytoplasm. Its function is as follows. Plays a role in the formation of clathrin-coated invaginations and endocytosis. This chain is Epsin-2 (Epn2), found in Rattus norvegicus (Rat).